We begin with the raw amino-acid sequence, 741 residues long: Interleukin-17 receptor D (741 aa).

An N-terminal signal peptide occupies residues 1–26 (MAPGRELGAFLLALLAFCGGRRLAEA). Residues 27 to 301 (AGGPGGRRGA…VHSPWAGPIR (275 aa)) lie on the Extracellular side of the membrane. N-linked (GlcNAc...) asparagine glycosylation is found at Asn-57, Asn-82, Asn-173, Asn-208, and Asn-279. The helical transmembrane segment at 302-322 (AIAITVPLVVISAFATLFTVM) threads the bilayer. At 323 to 741 (CRKKQQENIY…TDELQAIAPL (419 aa)) the chain is on the cytoplasmic side. Residues 357–510 (RPKVFICYSS…LMDNLPQLYS (154 aa)) form the SEFIR domain. Over residues 688–703 (TETSSITGSVSSSSGL) the composition is skewed to low complexity. Residues 688-708 (TETSSITGSVSSSSGLGEEEP) are disordered.

It is found in the membrane. Functionally, feedback inhibitor of fibroblast growth factor mediated Ras-MAPK signaling and ERK activation. May inhibit FGF-induced FGFR1 tyrosine phosphorylation. Inhibits TGFB-induced epithelial-to-mesenchymal transition in lens epithelial cells. This is Interleukin-17 receptor D (IL17RD) from Gallus gallus (Chicken).